The following is a 75-amino-acid chain: Brevinin-2SN2 (75 aa).

A signal peptide spans 1-22; the sequence is MFTMKKSLLFLFFLGTISLSFC. A propeptide spans 23 to 40 (removed in mature form); it reads EEERGADEDDGGEMTEEE. Cysteine 69 and cysteine 75 are disulfide-bonded.

Belongs to the frog skin active peptide (FSAP) family. Brevinin subfamily. Expressed by the skin glands.

It is found in the secreted. In terms of biological role, antimicrobial peptide. Active against some Gram-negative and a variety of Gram-positive bacterial strains. Active against fungus C.glabrata 090902 but not against C.albicans ATCC 10231. Shows hemolytic activity against human erythrocytes. This chain is Brevinin-2SN2, found in Sylvirana spinulosa (Fine-spined frog).